The sequence spans 317 residues: tRNA dimethylallyltransferase (317 aa).

14–21 (GPTAVGKT) is an ATP binding site. 16-21 (TAVGKT) provides a ligand contact to substrate. The segment at 39–42 (DSMQ) is interaction with substrate tRNA.

The protein belongs to the IPP transferase family. Monomer. Mg(2+) is required as a cofactor.

It catalyses the reaction adenosine(37) in tRNA + dimethylallyl diphosphate = N(6)-dimethylallyladenosine(37) in tRNA + diphosphate. Its function is as follows. Catalyzes the transfer of a dimethylallyl group onto the adenine at position 37 in tRNAs that read codons beginning with uridine, leading to the formation of N6-(dimethylallyl)adenosine (i(6)A). The sequence is that of tRNA dimethylallyltransferase from Bacillus cereus (strain G9842).